Reading from the N-terminus, the 623-residue chain is Transketolase (623 aa).

N-acetylmethionine is present on Met1. Phosphoserine is present on Ser3. 2 positions are modified to N6-acetyllysine: Lys6 and Lys11. Residue His37 coordinates substrate. 2 residues coordinate thiamine diphosphate: Ser40 and His77. At Ser104 the chain carries Phosphoserine. Position 123-125 (Gly123–Leu125) interacts with thiamine diphosphate. Lys144 carries the N6-acetyllysine modification. A Mg(2+)-binding site is contributed by Asp155. Thiamine diphosphate-binding residues include Gly156 and Asn185. Positions 185 and 187 each coordinate Mg(2+). Lys204, Lys232, and Lys241 each carry N6-acetyllysine. Thiamine diphosphate contacts are provided by Lys244 and His258. Position 258 (His258) interacts with substrate. Residue Lys260 is modified to N6-acetyllysine. Residue Tyr275 is modified to Phosphotyrosine. At Thr287 the chain carries Phosphothreonine. Ser295 is subject to Phosphoserine. Positions 318 and 345 each coordinate substrate. Ser345 is modified (phosphoserine). Residue Lys352 forms a Glycyl lysine isopeptide (Lys-Gly) (interchain with G-Cter in SUMO2) linkage. Glu366 acts as the Proton donor in catalysis. Phe392 contacts thiamine diphosphate. 2 residues coordinate substrate: His416 and Asp424. Position 428 (Gln428) interacts with thiamine diphosphate. Arg474 is a substrate binding site. Residues Lys538 and Lys603 each carry the N6-acetyllysine modification.

It belongs to the transketolase family. Homodimer. Mg(2+) is required as a cofactor. The cofactor is Ca(2+). It depends on Mn(2+) as a cofactor. Co(2+) serves as cofactor. Requires thiamine diphosphate as cofactor.

The enzyme catalyses D-sedoheptulose 7-phosphate + D-glyceraldehyde 3-phosphate = aldehydo-D-ribose 5-phosphate + D-xylulose 5-phosphate. Catalyzes the transfer of a two-carbon ketol group from a ketose donor to an aldose acceptor, via a covalent intermediate with the cofactor thiamine pyrophosphate. This Homo sapiens (Human) protein is Transketolase (TKT).